Reading from the N-terminus, the 239-residue chain is Sugar fermentation stimulation protein homolog (239 aa).

This sequence belongs to the SfsA family.

The protein is Sugar fermentation stimulation protein homolog of Alcanivorax borkumensis (strain ATCC 700651 / DSM 11573 / NCIMB 13689 / SK2).